The following is a 307-amino-acid chain: 4-hydroxythreonine-4-phosphate dehydrogenase (307 aa).

Residues His-121 and Thr-122 each contribute to the substrate site. The a divalent metal cation site is built by His-150, His-189, and His-245. 3 residues coordinate substrate: Lys-253, Asn-262, and Arg-271.

Belongs to the PdxA family. As to quaternary structure, homodimer. Requires Zn(2+) as cofactor. Mg(2+) is required as a cofactor. The cofactor is Co(2+).

The protein resides in the cytoplasm. The catalysed reaction is 4-(phosphooxy)-L-threonine + NAD(+) = 3-amino-2-oxopropyl phosphate + CO2 + NADH. Its pathway is cofactor biosynthesis; pyridoxine 5'-phosphate biosynthesis; pyridoxine 5'-phosphate from D-erythrose 4-phosphate: step 4/5. In terms of biological role, catalyzes the NAD(P)-dependent oxidation of 4-(phosphooxy)-L-threonine (HTP) into 2-amino-3-oxo-4-(phosphooxy)butyric acid which spontaneously decarboxylates to form 3-amino-2-oxopropyl phosphate (AHAP). The protein is 4-hydroxythreonine-4-phosphate dehydrogenase of Sulfurimonas denitrificans (strain ATCC 33889 / DSM 1251) (Thiomicrospira denitrificans (strain ATCC 33889 / DSM 1251)).